We begin with the raw amino-acid sequence, 159 residues long: SsrA-binding protein (159 aa).

Positions 134–159 are disordered; that stretch reads KEHDKRDTERDRDWSRDKERLMKHNA.

It belongs to the SmpB family.

The protein localises to the cytoplasm. Required for rescue of stalled ribosomes mediated by trans-translation. Binds to transfer-messenger RNA (tmRNA), required for stable association of tmRNA with ribosomes. tmRNA and SmpB together mimic tRNA shape, replacing the anticodon stem-loop with SmpB. tmRNA is encoded by the ssrA gene; the 2 termini fold to resemble tRNA(Ala) and it encodes a 'tag peptide', a short internal open reading frame. During trans-translation Ala-aminoacylated tmRNA acts like a tRNA, entering the A-site of stalled ribosomes, displacing the stalled mRNA. The ribosome then switches to translate the ORF on the tmRNA; the nascent peptide is terminated with the 'tag peptide' encoded by the tmRNA and targeted for degradation. The ribosome is freed to recommence translation, which seems to be the essential function of trans-translation. The protein is SsrA-binding protein of Marinomonas sp. (strain MWYL1).